A 548-amino-acid chain; its full sequence is WAP, Kazal, immunoglobulin, Kunitz and NTR domain-containing protein 1 (548 aa).

A signal peptide spans 1 to 19 (MPALRPLLPLLLLLRLTSG). Residues 26–79 (LGSHPGVCPNQLSPNLWVDAQSTCERECSRDQDCAAAEKCCINVCGLHSCVAAR) form the WAP domain. Cystine bridges form between C33-C66, C49-C70, C53-C65, C59-C75, C116-C146, C120-C139, and C128-C157. The Kazal-like domain maps to 108 to 159 (WDGQPVCRCRDRCEKEPSFTCASDGLTYYNRCYMDAEACLRGLHLHIVPCKH). A disordered region spans residues 164–184 (PPSSPGPPETTARPTPGAAPV). The Ig-like C2-type domain maps to 186 to 279 (PALYSSPSPQ…GLLRADFPLS (94 aa)). Intrachain disulfides connect C207–C263, C299–C351, C306–C334, C326–C347, C359–C409, C368–C392, C384–C405, C417–C489, C420–C491, and C431–C540. BPTI/Kunitz inhibitor domains lie at 299-351 (CLPD…QQAC) and 359-409 (CVLP…EDAC). Positions 409-540 (CPVPRTPPCR…ILELLEKQAC (132 aa)) constitute an NTR domain. N493 carries an N-linked (GlcNAc...) asparagine glycan.

It belongs to the WFIKKN family. Expressed in pancreas, kidney, liver, placenta, and lung.

It localises to the secreted. Protease-inhibitor that contains multiple distinct protease inhibitor domains. Probably has serine protease- and metalloprotease-inhibitor activity. This Homo sapiens (Human) protein is WAP, Kazal, immunoglobulin, Kunitz and NTR domain-containing protein 1 (WFIKKN1).